Consider the following 465-residue polypeptide: Siroheme synthase (465 aa).

The tract at residues 1–203 (MDFLPLFHSL…GRPAEAERLL (203 aa)) is precorrin-2 dehydrogenase /sirohydrochlorin ferrochelatase. NAD(+) is bound by residues 22–23 (EV) and 43–44 (PQ). Residue Ser-128 is modified to Phosphoserine. The segment at 217-465 (GEVYLVGAGP…AWFEGAREGA (249 aa)) is uroporphyrinogen-III C-methyltransferase. S-adenosyl-L-methionine is bound at residue Pro-226. Residue Asp-249 is the Proton acceptor of the active site. Lys-271 functions as the Proton donor in the catalytic mechanism. S-adenosyl-L-methionine is bound by residues 302 to 304 (GGD), Ile-307, 332 to 333 (TA), Met-384, and Gly-413.

In the N-terminal section; belongs to the precorrin-2 dehydrogenase / sirohydrochlorin ferrochelatase family. This sequence in the C-terminal section; belongs to the precorrin methyltransferase family.

The catalysed reaction is uroporphyrinogen III + 2 S-adenosyl-L-methionine = precorrin-2 + 2 S-adenosyl-L-homocysteine + H(+). It carries out the reaction precorrin-2 + NAD(+) = sirohydrochlorin + NADH + 2 H(+). The enzyme catalyses siroheme + 2 H(+) = sirohydrochlorin + Fe(2+). It functions in the pathway cofactor biosynthesis; adenosylcobalamin biosynthesis; precorrin-2 from uroporphyrinogen III: step 1/1. The protein operates within cofactor biosynthesis; adenosylcobalamin biosynthesis; sirohydrochlorin from precorrin-2: step 1/1. It participates in porphyrin-containing compound metabolism; siroheme biosynthesis; precorrin-2 from uroporphyrinogen III: step 1/1. Its pathway is porphyrin-containing compound metabolism; siroheme biosynthesis; siroheme from sirohydrochlorin: step 1/1. It functions in the pathway porphyrin-containing compound metabolism; siroheme biosynthesis; sirohydrochlorin from precorrin-2: step 1/1. Multifunctional enzyme that catalyzes the SAM-dependent methylations of uroporphyrinogen III at position C-2 and C-7 to form precorrin-2 via precorrin-1. Then it catalyzes the NAD-dependent ring dehydrogenation of precorrin-2 to yield sirohydrochlorin. Finally, it catalyzes the ferrochelation of sirohydrochlorin to yield siroheme. The protein is Siroheme synthase of Pseudomonas paraeruginosa (strain DSM 24068 / PA7) (Pseudomonas aeruginosa (strain PA7)).